The chain runs to 203 residues: FMN-dependent NADH:quinone oxidoreductase (203 aa).

FMN contacts are provided by residues Ser9, 15-17, and 138-141; these read SVS and SRGG.

Belongs to the azoreductase type 1 family. Homodimer. It depends on FMN as a cofactor.

The catalysed reaction is 2 a quinone + NADH + H(+) = 2 a 1,4-benzosemiquinone + NAD(+). It catalyses the reaction N,N-dimethyl-1,4-phenylenediamine + anthranilate + 2 NAD(+) = 2-(4-dimethylaminophenyl)diazenylbenzoate + 2 NADH + 2 H(+). Quinone reductase that provides resistance to thiol-specific stress caused by electrophilic quinones. In terms of biological role, also exhibits azoreductase activity. Catalyzes the reductive cleavage of the azo bond in aromatic azo compounds to the corresponding amines. This chain is FMN-dependent NADH:quinone oxidoreductase, found in Methylorubrum populi (strain ATCC BAA-705 / NCIMB 13946 / BJ001) (Methylobacterium populi).